A 425-amino-acid polypeptide reads, in one-letter code: Ribonuclease T2-like (425 aa).

Positions 1–18 (MLLNKGLLASLLAYTTTA) are cleaved as a signal peptide. 5 cysteine pairs are disulfide-bonded: Cys32-Cys51, Cys40-Cys99, Cys50-Cys175, Cys107-Cys167, and Cys245-Cys281. Asn42 carries an N-linked (GlcNAc...) asparagine glycan. Residue His92 is part of the active site. Residue Asn134 is glycosylated (N-linked (GlcNAc...) asparagine). Residues Glu160 and His164 contribute to the active site.

It belongs to the RNase T2 family.

It localises to the vacuole lumen. The protein resides in the cytoplasm. The catalysed reaction is a ribonucleotidyl-ribonucleotide-RNA + H2O = a 3'-end 3'-phospho-ribonucleotide-RNA + a 5'-end dephospho-ribonucleoside-RNA + H(+). In terms of biological role, rnase which modulates cell survival under stress conditions. Released from the vacuole to the cytoplasm during stress to promote tRNA and rRNA cleavage and to activate separately a downstream pathway that promotes cell death. Involved in cell size, vacuolar morphology and growth at high temperatures and high salt concentration. This chain is Ribonuclease T2-like (RNY1), found in Kluyveromyces lactis (strain ATCC 8585 / CBS 2359 / DSM 70799 / NBRC 1267 / NRRL Y-1140 / WM37) (Yeast).